We begin with the raw amino-acid sequence, 346 residues long: Histidinol-phosphate aminotransferase (346 aa).

Residue Lys-206 is modified to N6-(pyridoxal phosphate)lysine.

The protein belongs to the class-II pyridoxal-phosphate-dependent aminotransferase family. Histidinol-phosphate aminotransferase subfamily. As to quaternary structure, homodimer. It depends on pyridoxal 5'-phosphate as a cofactor.

It carries out the reaction L-histidinol phosphate + 2-oxoglutarate = 3-(imidazol-4-yl)-2-oxopropyl phosphate + L-glutamate. The protein operates within amino-acid biosynthesis; L-histidine biosynthesis; L-histidine from 5-phospho-alpha-D-ribose 1-diphosphate: step 7/9. This is Histidinol-phosphate aminotransferase from Bacteroides thetaiotaomicron (strain ATCC 29148 / DSM 2079 / JCM 5827 / CCUG 10774 / NCTC 10582 / VPI-5482 / E50).